We begin with the raw amino-acid sequence, 87 residues long: Mitochondrial import inner membrane translocase subunit TIM9 (87 aa).

Methionine 1 is modified (N-acetylmethionine). Positions 35–59 match the Twin CX3C motif motif; sequence CFTDCVNDFTTSKLTNKEQTCIMKC. Cystine bridges form between cysteine 35–cysteine 59 and cysteine 39–cysteine 55.

Belongs to the small Tim family. Heterohexamer; composed of 3 copies of TIM9 and 3 copies of TIM10, named soluble 70 kDa complex. Associates with the TIM12 component of the TIM22 complex, whose core is composed of TIM18, TIM22 and TIM54. Interacts with the transmembrane regions of multi-pass transmembrane proteins in transit.

Its subcellular location is the mitochondrion inner membrane. It localises to the mitochondrion intermembrane space. Functionally, mitochondrial intermembrane chaperone that participates in the import and insertion of multi-pass transmembrane proteins into the mitochondrial inner membrane. Also required for the transfer of beta-barrel precursors from the TOM complex to the sorting and assembly machinery (SAM complex) of the outer membrane. Acts as a chaperone-like protein that protects the hydrophobic precursors from aggregation and guide them through the mitochondrial intermembrane space. Compared to TIM10, it may have a strong structural role. This is Mitochondrial import inner membrane translocase subunit TIM9 (TIM9) from Saccharomyces cerevisiae (strain ATCC 204508 / S288c) (Baker's yeast).